A 224-amino-acid chain; its full sequence is Orotidine 5'-phosphate decarboxylase (224 aa).

Substrate is bound by residues D10, K32, 59-68 (DLKLHDIPNT), T115, R175, Q184, G204, and R205. K61 acts as the Proton donor in catalysis.

This sequence belongs to the OMP decarboxylase family. Type 1 subfamily. Homodimer.

The enzyme catalyses orotidine 5'-phosphate + H(+) = UMP + CO2. Its pathway is pyrimidine metabolism; UMP biosynthesis via de novo pathway; UMP from orotate: step 2/2. Catalyzes the decarboxylation of orotidine 5'-monophosphate (OMP) to uridine 5'-monophosphate (UMP). The chain is Orotidine 5'-phosphate decarboxylase from Erythrobacter litoralis (strain HTCC2594).